A 325-amino-acid polypeptide reads, in one-letter code: tRNA(Ile)-lysidine synthase (325 aa).

35–40 contacts ATP; sequence SGGQDS.

The protein belongs to the tRNA(Ile)-lysidine synthase family.

It is found in the cytoplasm. It catalyses the reaction cytidine(34) in tRNA(Ile2) + L-lysine + ATP = lysidine(34) in tRNA(Ile2) + AMP + diphosphate + H(+). Functionally, ligates lysine onto the cytidine present at position 34 of the AUA codon-specific tRNA(Ile) that contains the anticodon CAU, in an ATP-dependent manner. Cytidine is converted to lysidine, thus changing the amino acid specificity of the tRNA from methionine to isoleucine. This is tRNA(Ile)-lysidine synthase from Gloeobacter violaceus (strain ATCC 29082 / PCC 7421).